Reading from the N-terminus, the 550-residue chain is Hydroxylamine reductase (550 aa).

Positions 7, 10, 19, and 25 each coordinate [4Fe-4S] cluster. Hybrid [4Fe-2O-2S] cluster contacts are provided by H244, E268, C312, C405, C433, C458, E493, and K495. C405 is subject to Cysteine persulfide.

This sequence belongs to the HCP family. [4Fe-4S] cluster is required as a cofactor. The cofactor is hybrid [4Fe-2O-2S] cluster.

Its subcellular location is the cytoplasm. The catalysed reaction is A + NH4(+) + H2O = hydroxylamine + AH2 + H(+). Its function is as follows. Catalyzes the reduction of hydroxylamine to form NH(3) and H(2)O. This Porphyromonas gingivalis (strain ATCC BAA-308 / W83) protein is Hydroxylamine reductase.